The primary structure comprises 459 residues: Zinc finger protein 213 (459 aa).

Residues 45-126 enclose the SCAN box domain; that stretch reads RQRFRQFCYG…VALVEDLQKQ (82 aa). Residues 128–188 form a disordered region; the sequence is VKAWRQDVPS…ALLKEGRPGE (61 aa). The KRAB domain maps to 202-292; that stretch reads VALGDIPFYF…ENRPRAALGP (91 aa). 5 C2H2-type zinc fingers span residues 317 to 339, 345 to 367, 373 to 395, 401 to 423, and 429 to 451; these read HSCG…QRTH, HKCP…QGVH, FSCS…QRIH, FGCS…RRVH, and FGCG…QSLH.

Belongs to the krueppel C2H2-type zinc-finger protein family. Widely expressed with highest levels in testis.

It localises to the nucleus. Functionally, may be involved in transcriptional regulation. This chain is Zinc finger protein 213 (ZNF213), found in Homo sapiens (Human).